The following is a 242-amino-acid chain: Phosphoribosylaminoimidazole-succinocarboxamide synthase (242 aa).

The protein belongs to the SAICAR synthetase family.

It carries out the reaction 5-amino-1-(5-phospho-D-ribosyl)imidazole-4-carboxylate + L-aspartate + ATP = (2S)-2-[5-amino-1-(5-phospho-beta-D-ribosyl)imidazole-4-carboxamido]succinate + ADP + phosphate + 2 H(+). It participates in purine metabolism; IMP biosynthesis via de novo pathway; 5-amino-1-(5-phospho-D-ribosyl)imidazole-4-carboxamide from 5-amino-1-(5-phospho-D-ribosyl)imidazole-4-carboxylate: step 1/2. The chain is Phosphoribosylaminoimidazole-succinocarboxamide synthase from Prochlorococcus marinus subsp. pastoris (strain CCMP1986 / NIES-2087 / MED4).